A 122-amino-acid polypeptide reads, in one-letter code: Large ribosomal subunit protein uL14 (122 aa).

The protein belongs to the universal ribosomal protein uL14 family. In terms of assembly, part of the 50S ribosomal subunit. Forms a cluster with proteins L3 and L19. In the 70S ribosome, L14 and L19 interact and together make contacts with the 16S rRNA in bridges B5 and B8.

Its function is as follows. Binds to 23S rRNA. Forms part of two intersubunit bridges in the 70S ribosome. This is Large ribosomal subunit protein uL14 from Aliarcobacter butzleri (strain RM4018) (Arcobacter butzleri).